The chain runs to 109 residues: Phosphoribosyl-ATP pyrophosphatase (109 aa).

Belongs to the PRA-PH family.

It localises to the cytoplasm. It carries out the reaction 1-(5-phospho-beta-D-ribosyl)-ATP + H2O = 1-(5-phospho-beta-D-ribosyl)-5'-AMP + diphosphate + H(+). It participates in amino-acid biosynthesis; L-histidine biosynthesis; L-histidine from 5-phospho-alpha-D-ribose 1-diphosphate: step 2/9. This chain is Phosphoribosyl-ATP pyrophosphatase, found in Sphingopyxis alaskensis (strain DSM 13593 / LMG 18877 / RB2256) (Sphingomonas alaskensis).